A 295-amino-acid chain; its full sequence is 4-hydroxy-tetrahydrodipicolinate synthase (295 aa).

Threonine 46 provides a ligand contact to pyruvate. The Proton donor/acceptor role is filled by tyrosine 135. Lysine 164 functions as the Schiff-base intermediate with substrate in the catalytic mechanism. Isoleucine 205 contributes to the pyruvate binding site.

The protein belongs to the DapA family. As to quaternary structure, homotetramer; dimer of dimers.

Its subcellular location is the cytoplasm. The enzyme catalyses L-aspartate 4-semialdehyde + pyruvate = (2S,4S)-4-hydroxy-2,3,4,5-tetrahydrodipicolinate + H2O + H(+). It functions in the pathway amino-acid biosynthesis; L-lysine biosynthesis via DAP pathway; (S)-tetrahydrodipicolinate from L-aspartate: step 3/4. Catalyzes the condensation of (S)-aspartate-beta-semialdehyde [(S)-ASA] and pyruvate to 4-hydroxy-tetrahydrodipicolinate (HTPA). The polypeptide is 4-hydroxy-tetrahydrodipicolinate synthase (Aliarcobacter butzleri (strain RM4018) (Arcobacter butzleri)).